The sequence spans 148 residues: MDTPNKDDSIIRFSVSLQQNLLDELDNRIIKNGYSSRSELVRDMIREKLVEDNWVEDNPNDGSKIAVLVVIYDHHQRELNQRMIDIQHASGTHVLCTTHIHMDEHNCLETIILQGNSLEIQRLQLEIGGLRGVKFAKLTKASSFEYNE.

Ni(2+) is bound by residues His88, His99, His101, and Cys107.

It belongs to the transcriptional regulatory CopG/NikR family. As to quaternary structure, homotetramer. It depends on Ni(2+) as a cofactor.

Transcriptional regulator. The protein is Putative nickel-responsive regulator of Helicobacter pylori (strain J99 / ATCC 700824) (Campylobacter pylori J99).